Consider the following 290-residue polypeptide: Acetyl-coenzyme A carboxylase carboxyl transferase subunit beta (290 aa).

The 263-residue stretch at Val28–Asn290 folds into the CoA carboxyltransferase N-terminal domain. Residues Cys32, Cys35, Cys51, and Cys54 each contribute to the Zn(2+) site. Residues Cys32 to Cys54 form a C4-type zinc finger.

This sequence belongs to the AccD/PCCB family. As to quaternary structure, acetyl-CoA carboxylase is a heterohexamer composed of biotin carboxyl carrier protein (AccB), biotin carboxylase (AccC) and two subunits each of ACCase subunit alpha (AccA) and ACCase subunit beta (AccD). It depends on Zn(2+) as a cofactor.

The protein localises to the cytoplasm. It catalyses the reaction N(6)-carboxybiotinyl-L-lysyl-[protein] + acetyl-CoA = N(6)-biotinyl-L-lysyl-[protein] + malonyl-CoA. It functions in the pathway lipid metabolism; malonyl-CoA biosynthesis; malonyl-CoA from acetyl-CoA: step 1/1. Functionally, component of the acetyl coenzyme A carboxylase (ACC) complex. Biotin carboxylase (BC) catalyzes the carboxylation of biotin on its carrier protein (BCCP) and then the CO(2) group is transferred by the transcarboxylase to acetyl-CoA to form malonyl-CoA. The polypeptide is Acetyl-coenzyme A carboxylase carboxyl transferase subunit beta (Geobacillus thermodenitrificans (strain NG80-2)).